Consider the following 62-residue polypeptide: Large ribosomal subunit protein uL30 (62 aa).

This sequence belongs to the universal ribosomal protein uL30 family. In terms of assembly, part of the 50S ribosomal subunit.

The polypeptide is Large ribosomal subunit protein uL30 (Shouchella clausii (strain KSM-K16) (Alkalihalobacillus clausii)).